Reading from the N-terminus, the 44-residue chain is Photosystem I reaction center subunit IX (44 aa).

Residues Y7 to I27 traverse the membrane as a helical segment.

Belongs to the PsaJ family.

The protein resides in the plastid. It is found in the chloroplast thylakoid membrane. Functionally, may help in the organization of the PsaE and PsaF subunits. In Nymphaea alba (White water-lily), this protein is Photosystem I reaction center subunit IX.